Here is a 122-residue protein sequence, read N- to C-terminus: Large ribosomal subunit protein uL29 (122 aa).

The residue at position 12 (Ser-12) is a Phosphoserine.

It belongs to the universal ribosomal protein uL29 family. In terms of assembly, component of the large ribosomal subunit (LSU). Mature yeast ribosomes consist of a small (40S) and a large (60S) subunit. The 40S small subunit contains 1 molecule of ribosomal RNA (18S rRNA) and at least 33 different proteins. The large 60S subunit contains 3 rRNA molecules (25S, 5.8S and 5S rRNA) and at least 46 different proteins. uL29 is associated with the polypeptide exit tunnel.

It is found in the cytoplasm. The protein localises to the nucleus. Its subcellular location is the nucleolus. In terms of biological role, component of the ribosome, a large ribonucleoprotein complex responsible for the synthesis of proteins in the cell. The small ribosomal subunit (SSU) binds messenger RNAs (mRNAs) and translates the encoded message by selecting cognate aminoacyl-transfer RNA (tRNA) molecules. The large subunit (LSU) contains the ribosomal catalytic site termed the peptidyl transferase center (PTC), which catalyzes the formation of peptide bonds, thereby polymerizing the amino acids delivered by tRNAs into a polypeptide chain. The nascent polypeptides leave the ribosome through a tunnel in the LSU and interact with protein factors that function in enzymatic processing, targeting, and the membrane insertion of nascent chains at the exit of the ribosomal tunnel. This chain is Large ribosomal subunit protein uL29 (rpl35), found in Schizosaccharomyces pombe (strain 972 / ATCC 24843) (Fission yeast).